The following is a 314-amino-acid chain: DNA-directed RNA polymerase subunit alpha (314 aa).

The interval 1 to 227 (MTTFEIECIE…ELLFPLKEIN (227 aa)) is alpha N-terminal domain (alpha-NTD). Residues 237–314 (IEDSKINQIL…LPKEKTSKSN (78 aa)) are alpha C-terminal domain (alpha-CTD).

This sequence belongs to the RNA polymerase alpha chain family. As to quaternary structure, in plastids the minimal PEP RNA polymerase catalytic core is composed of four subunits: alpha, beta, beta', and beta''. When a (nuclear-encoded) sigma factor is associated with the core the holoenzyme is formed, which can initiate transcription.

The protein localises to the plastid. The protein resides in the chloroplast. The catalysed reaction is RNA(n) + a ribonucleoside 5'-triphosphate = RNA(n+1) + diphosphate. Its function is as follows. DNA-dependent RNA polymerase catalyzes the transcription of DNA into RNA using the four ribonucleoside triphosphates as substrates. The polypeptide is DNA-directed RNA polymerase subunit alpha (Pyrenomonas salina).